A 416-amino-acid chain; its full sequence is Enterobactin exporter EntS (416 aa).

Residues 1-21 are Cytoplasmic-facing; that stretch reads MNKQSWLLNLSLLKTHPAFRA. Residues 22–42 traverse the membrane as a helical segment; it reads VFLARFISIVSLGLLGVAVPV. Over 43 to 55 the chain is Periplasmic; sequence QIQMMTHSTWQVG. The chain crosses the membrane as a helical span at residues 56-76; that stretch reads LSVTLTGGAMFVGLMVGGVLA. Residues 77-83 lie on the Cytoplasmic side of the membrane; the sequence is DRYERKK. The helical transmembrane segment at 84-104 threads the bilayer; that stretch reads VILLARGTCGIGFIGLCLNAL. Residues 105 to 109 lie on the Periplasmic side of the membrane; sequence LPEPS. Residues 110–130 traverse the membrane as a helical segment; the sequence is LLAIYLLGLWDGFFASLGVTA. At 131–156 the chain is on the cytoplasmic side; the sequence is LLAATPALVGRENLMQAGAITMLTVR. A helical membrane pass occupies residues 157–177; sequence LGSVISPMIGGLLLATGGVAW. A topological domain (periplasmic) is located at residue Asn-178. A helical transmembrane segment spans residues 179–199; that stretch reads YGLAAAGTFITLLPLLSLPAL. At 200–218 the chain is on the cytoplasmic side; it reads PPPPQPREHPLKSLLAGFR. The chain crosses the membrane as a helical span at residues 219–239; sequence FLLASPLVGGIALLGGLLTMA. Residues 240–256 are Periplasmic-facing; sequence SAVRVLYPALADNWQMS. A helical transmembrane segment spans residues 257–277; that stretch reads AAQIGFLYAAIPLGAAIGALT. The Cytoplasmic segment spans residues 278–287; sequence SGKLAHSARP. A helical membrane pass occupies residues 288 to 307; that stretch reads GLLMLLSTLGSFLAIGLFGL. Over 308 to 313 the chain is Periplasmic; it reads MPMWIL. The chain crosses the membrane as a helical span at residues 314–336; sequence GVICLALFGWLSAVSSLLQYTML. Over 337-356 the chain is Cytoplasmic; sequence QTQTPEAMLGRINGLWTAQN. A helical transmembrane segment spans residues 357-377; sequence VTGDAIGAALLGGLGAMMTPV. A topological domain (periplasmic) is located at residue Ala-378. A helical membrane pass occupies residues 379–399; that stretch reads SASASGFGLLIIGVLLLLVLV. Residues 400–416 lie on the Cytoplasmic side of the membrane; it reads ELRRFRQTPPQVTASDS.

This sequence belongs to the major facilitator superfamily. EntS (TC 2.A.1.38) family.

The protein localises to the cell inner membrane. In terms of biological role, component of an export pathway for enterobactin. In Escherichia coli O81 (strain ED1a), this protein is Enterobactin exporter EntS.